The following is a 31-amino-acid chain: Cyclotide Hyfl-A (31 aa).

A cross-link (cyclopeptide (Ser-Asn)) is located at residues 1–31 (SISCGESCVYIPCTVTALVGCTCKDKVCYLN). 3 disulfide bridges follow: C4–C21, C8–C23, and C13–C28.

The protein belongs to the cyclotide family. Bracelet subfamily. In terms of processing, this is a cyclic peptide.

Functionally, probably participates in a plant defense mechanism. This is Cyclotide Hyfl-A from Hybanthus floribundus (Greenviolet).